Here is a 525-residue protein sequence, read N- to C-terminus: GMP synthase [glutamine-hydrolyzing] (525 aa).

The Glutamine amidotransferase type-1 domain maps to 13 to 202 (TILVLDFGSQ…AVDLCHAKQN (190 aa)). The Nucleophile role is filled by C89. Catalysis depends on residues H176 and E178. One can recognise a GMPS ATP-PPase domain in the interval 203–400 (WTMKNFIGTE…LGISHELVWR (198 aa)). 231–237 (SGGVDST) is a binding site for ATP. XMP-binding residues include R304, D462, K517, and E523.

As to quaternary structure, homodimer. Mg(2+) is required as a cofactor.

Its subcellular location is the cytoplasm. It localises to the cytosol. It catalyses the reaction XMP + L-glutamine + ATP + H2O = GMP + L-glutamate + AMP + diphosphate + 2 H(+). It functions in the pathway purine metabolism; GMP biosynthesis; GMP from XMP (L-Gln route): step 1/1. Catalyzes the conversion of xanthine monophosphate (XMP) to GMP in the presence of glutamine and ATP through an adenyl-XMP intermediate. The sequence is that of GMP synthase [glutamine-hydrolyzing] (GUA1) from Candida glabrata (strain ATCC 2001 / BCRC 20586 / JCM 3761 / NBRC 0622 / NRRL Y-65 / CBS 138) (Yeast).